We begin with the raw amino-acid sequence, 276 residues long: Octanoyltransferase LipM (276 aa).

The BPL/LPL catalytic domain occupies 31–246 (GLIPPVIRFY…GFAKSLQIEL (216 aa)). The Acyl-thioester intermediate role is filled by Cys148.

This sequence belongs to the octanoyltransferase LipM family. Monomer.

The catalysed reaction is octanoyl-[ACP] + L-lysyl-[protein] = N(6)-octanoyl-L-lysyl-[protein] + holo-[ACP] + H(+). It participates in protein modification; protein lipoylation via endogenous pathway; protein N(6)-(lipoyl)lysine from octanoyl-[acyl-carrier-protein]. In terms of biological role, catalyzes the transfer of endogenously produced octanoic acid from octanoyl-acyl-carrier-protein onto the lipoyl domain of GcvH, an intermediate carrier during protein lipoylation. The sequence is that of Octanoyltransferase LipM from Lysinibacillus sphaericus (strain C3-41).